We begin with the raw amino-acid sequence, 615 residues long: Protein DlpA (615 aa).

This sequence belongs to the isocitrate and isopropylmalate dehydrogenases family. The protein to M.jannaschii MJ0644 in the C-terminal section.

This Legionella pneumophila subsp. pneumophila (strain Philadelphia 1 / ATCC 33152 / DSM 7513) protein is Protein DlpA (dlpA).